A 547-amino-acid polypeptide reads, in one-letter code: MAAKDVKFGNDARVKMLRGVNVLADAVKVTLGPKGRNVVLDKSFGAPTITKDGVSVAREIELEDKFENMGAQMVKEVASKANDAAGDGTTTATVLAQAIVNEGLKAVAAGMNPMDLKRGIDKAVLAAVEELKALSVPCSDSKAIAQVGTISANSDETVGKLIAEVDKVGKEGVITVEDGTGLEDELDVVEGMQFDRGYLSPYFINKPDTGAVELESPFILLADKKISNIREMLPVLEAVAKAGKPLVIIAEDVEGEALATLVVNTMRGIVKVAAVKAPGFGDRRKAMLQDIATLTGGTVISEEIGMELEKATLEDLGQAKRVVINKDTTTIIDGVGEESAIQGRVAQIRKQIEEATSDYDREKLQERVAKVAGGVAVIKVGAATEVEMKEKKARVDDALHATRAAVEEGVVAGGGVALVRVAAKLAGLTGQNEDQNVGIKVALRAMEAPLRQIVSNAGEEPSVVANNVKAGDGNYGYNAATEEYGNMIDFGILDPTKVTRSALQYAASVAGLMITTECMVTDLPKSDAPDLGAAGGMGGMGGMGGMM.

ATP contacts are provided by residues 30 to 33 (TLGP), Lys51, 87 to 91 (DGTTT), Gly414, 478 to 480 (NAA), and Asp494.

This sequence belongs to the chaperonin (HSP60) family. Forms a cylinder of 14 subunits composed of two heptameric rings stacked back-to-back. Interacts with the co-chaperonin GroES.

It localises to the cytoplasm. It catalyses the reaction ATP + H2O + a folded polypeptide = ADP + phosphate + an unfolded polypeptide.. In terms of biological role, together with its co-chaperonin GroES, plays an essential role in assisting protein folding. The GroEL-GroES system forms a nano-cage that allows encapsulation of the non-native substrate proteins and provides a physical environment optimized to promote and accelerate protein folding. This is Chaperonin GroEL from Klebsiella pneumoniae.